Here is a 122-residue protein sequence, read N- to C-terminus: Large ribosomal subunit protein bL12 (122 aa).

This sequence belongs to the bacterial ribosomal protein bL12 family. In terms of assembly, homodimer. Part of the ribosomal stalk of the 50S ribosomal subunit. Forms a multimeric L10(L12)X complex, where L10 forms an elongated spine to which 2 to 4 L12 dimers bind in a sequential fashion. Binds GTP-bound translation factors.

Its function is as follows. Forms part of the ribosomal stalk which helps the ribosome interact with GTP-bound translation factors. Is thus essential for accurate translation. The chain is Large ribosomal subunit protein bL12 from Xylella fastidiosa (strain 9a5c).